The sequence spans 346 residues: 4-hydroxy-2-oxovalerate aldolase (346 aa).

Positions 8–260 constitute a Pyruvate carboxyltransferase domain; it reads VTLHDMSLRD…ETGIDLYKIM (253 aa). 16 to 17 is a substrate binding site; it reads RD. Residue Asp-17 participates in Mn(2+) binding. The active-site Proton acceptor is the His-20. Residues Ser-170 and His-199 each contribute to the substrate site. Mn(2+) contacts are provided by His-199 and His-201. Tyr-290 serves as a coordination point for substrate.

Belongs to the 4-hydroxy-2-oxovalerate aldolase family.

It catalyses the reaction (S)-4-hydroxy-2-oxopentanoate = acetaldehyde + pyruvate. The protein is 4-hydroxy-2-oxovalerate aldolase (nahM) of Stutzerimonas stutzeri (Pseudomonas stutzeri).